The following is a 449-amino-acid chain: Tubulin alpha-1C chain (449 aa).

The short motif at 1–4 (MREC) is the MREC motif element. Q11 contacts GTP. An N6-acetyllysine modification is found at K40. E71, S140, G144, T145, T179, N206, and N228 together coordinate GTP. A Mg(2+)-binding site is contributed by E71. E254 is a catalytic residue. At Y282 the chain carries 3'-nitrotyrosine. Y432 carries the post-translational modification Phosphotyrosine. Residue S439 is modified to Phosphoserine. 3'-nitrotyrosine is present on Y449.

It belongs to the tubulin family. In terms of assembly, dimer of alpha and beta chains. A typical microtubule is a hollow water-filled tube with an outer diameter of 25 nm and an inner diameter of 15 nM. Alpha-beta heterodimers associate head-to-tail to form protofilaments running lengthwise along the microtubule wall with the beta-tubulin subunit facing the microtubule plus end conferring a structural polarity. Microtubules usually have 13 protofilaments but different protofilament numbers can be found in some organisms and specialized cells. Mg(2+) serves as cofactor. In terms of processing, some glutamate residues at the C-terminus are polyglycylated, resulting in polyglycine chains on the gamma-carboxyl group. Glycylation is mainly limited to tubulin incorporated into axonemes (cilia and flagella) whereas glutamylation is prevalent in neuronal cells, centrioles, axonemes, and the mitotic spindle. Both modifications can coexist on the same protein on adjacent residues, and lowering polyglycylation levels increases polyglutamylation, and reciprocally. Cilia and flagella glycylation is required for their stability and maintenance. Flagella glycylation controls sperm motility. Post-translationally, some glutamate residues at the C-terminus are polyglutamylated, resulting in polyglutamate chains on the gamma-carboxyl group. Polyglutamylation plays a key role in microtubule severing by spastin (SPAST). SPAST preferentially recognizes and acts on microtubules decorated with short polyglutamate tails: severing activity by SPAST increases as the number of glutamates per tubulin rises from one to eight, but decreases beyond this glutamylation threshold. Glutamylation is also involved in cilia motility. Acetylation of alpha chains at Lys-40 is located inside the microtubule lumen. This modification has been correlated with increased microtubule stability, intracellular transport and ciliary assembly. In terms of processing, methylation of alpha chains at Lys-40 is found in mitotic microtubules and is required for normal mitosis and cytokinesis contributing to genomic stability. Post-translationally, nitration of Tyr-449 is irreversible and interferes with normal dynein intracellular distribution. Undergoes a tyrosination/detyrosination cycle, the cyclic removal and re-addition of a C-terminal tyrosine residue by the enzymes tubulin tyrosine carboxypeptidase (MATCAP1, VASH1 or VASH2) and tubulin tyrosine ligase (TTL), respectively. In terms of processing, tyrosination promotes microtubule interaction with CAP-Gly domain-containing proteins such as CLIP1, CLIP2 and DCTN1. Tyrosination regulates the initiation of dynein-dynactin motility via interaction with DCTN1, which brings the dynein-dynactin complex into contact with microtubules. In neurons, tyrosinated tubulins mediate the initiation of retrograde vesicle transport. Post-translationally, detyrosination is involved in metaphase plate congression by guiding chromosomes during mitosis: detyrosination promotes interaction with CENPE, promoting pole-proximal transport of chromosomes toward the equator. Detyrosination increases microtubules-dependent mechanotransduction in dystrophic cardiac and skeletal muscle. In cardiomyocytes, detyrosinated microtubules are required to resist to contractile compression during contraction: detyrosination promotes association with desmin (DES) at force-generating sarcomeres, leading to buckled microtubules and mechanical resistance to contraction.

Its subcellular location is the cytoplasm. It is found in the cytoskeleton. It carries out the reaction GTP + H2O = GDP + phosphate + H(+). Its function is as follows. Tubulin is the major constituent of microtubules, a cylinder consisting of laterally associated linear protofilaments composed of alpha- and beta-tubulin heterodimers. Microtubules grow by the addition of GTP-tubulin dimers to the microtubule end, where a stabilizing cap forms. Below the cap, tubulin dimers are in GDP-bound state, owing to GTPase activity of alpha-tubulin. The sequence is that of Tubulin alpha-1C chain (Tuba1c) from Rattus norvegicus (Rat).